We begin with the raw amino-acid sequence, 64 residues long: Sperm protamine P1 (64 aa).

Positions 1-64 (MARYRHSRSR…SRRRRRRYYY (64 aa)) are disordered.

It belongs to the protamine P1 family. As to expression, testis.

Its subcellular location is the nucleus. The protein resides in the chromosome. Functionally, protamines substitute for histones in the chromatin of sperm during the haploid phase of spermatogenesis. They compact sperm DNA into a highly condensed, stable and inactive complex. The chain is Sperm protamine P1 (PRM1) from Hypsiprymnodon moschatus (Musky rat kangaroo).